Consider the following 1070-residue polypeptide: Granule associated Rac and RHOG effector protein 1 (1070 aa).

Disordered stretches follow at residues 681–771, 855–992, and 1032–1070; these read EQKA…VGAG, SQAM…STLP, and SYVQ…LPQY. The segment covering 692-702 has biased composition (pro residues); the sequence is PSLPVPPPPRA. Composition is skewed to low complexity over residues 719 to 742, 906 to 924, and 951 to 962; these read PQQQ…QPIG, AQGD…NGDS, and TSTLPSPPLLTT. At Ser-723 the chain carries Phosphoserine. Residues 977 to 992 are compositionally biased toward pro residues; it reads PKAPWQHPSPLPSTLP. Positions 1046–1058 are enriched in low complexity; sequence HKAAPKGFKAFPG.

Interacts with AGO2 and TNRC6A.

It localises to the cytoplasm. Its subcellular location is the P-body. Acts as an effector of RAC1. Associates with CCR4-NOT complex which is one of the major cellular mRNA deadenylases and is linked to various cellular processes including bulk mRNA degradation, miRNA-mediated repression, translational repression during translational initiation and general transcription regulation. May also play a role in miRNA silencing machinery. This chain is Granule associated Rac and RHOG effector protein 1, found in Homo sapiens (Human).